The following is a 395-amino-acid chain: Phosphoprotein (395 aa).

Over residues 143–157 (FSSGPSLTDQASSKD) the composition is skewed to polar residues. Residues 143 to 183 (FSSGPSLTDQASSKDPNFKRGGEKLTDATKADIGGSGASPG) are disordered. The segment covering 158 to 172 (PNFKRGGEKLTDATK) has biased composition (basic and acidic residues). The multimerization stretch occupies residues 220 to 283 (ENVKEIIEIL…MTTMKIMDPS (64 aa)).

The protein belongs to the rubulavirus/avulavirus P protein family. In terms of assembly, homotetramer. Interacts (via multimerization domain) with polymerase L; this interaction forms the polymerase L-P complex. Interacts (via N-terminus) with N0 (via Ncore); this interaction allows P to chaperon N0 to avoid N polymerization before encapsidation. Interacts (via C-terminus) with N-RNA template; this interaction positions the polymerase on the template for both transcription and replication.

In terms of biological role, essential cofactor of the RNA polymerase L that plays a central role in the transcription and replication by forming the polymerase complex with RNA polymerase L and recruiting L to the genomic N-RNA template for RNA synthesis. Also plays a central role in the encapsidation of nascent RNA chains by forming the encapsidation complex with the nucleocapsid protein N (N-P complex). Acts as a chaperone for newly synthesized free N protein, so-called N0, allowing encapsidation of nascent RNA chains during replication. The nucleoprotein protein N prevents excessive phosphorylation of P, which leads to down-regulation of viral transcription/ replication. Participates, together with N, in the formation of viral factories (viroplasms), which are large inclusions in the host cytoplasm where replication takes place. The chain is Phosphoprotein (P/V) from Simian virus 41 (SV41).